The following is a 440-amino-acid chain: Transposon Ty1-DR1 Gag polyprotein (440 aa).

3 stretches are compositionally biased toward polar residues: residues 1–10 (MESQQLSNYP), 48–60 (TKANSQQTTTPAS), and 127–152 (QSQFPQYPSSVGTPLSTPSPESGNTF). Disordered regions lie at residues 1-93 (MESQ…MMTQ), 126-173 (PQSQ…RPPP), and 352-440 (GSRN…PGTY). Residues 153–165 (TDSSSADSDMTST) show a composition bias toward low complexity. Positions 299–401 (NNGIHINNKV…NSKSKTARAH (103 aa)) are RNA-binding. A compositionally biased stretch (low complexity) spans 402–418 (NVSTSNNSPSTDNDSIS). S416 bears the Phosphoserine mark. Polar residues predominate over residues 419–428 (KSTTEPIQLN). Over residues 429–440 (NKHDLHLRPGTY) the composition is skewed to basic and acidic residues.

Homotrimer.

The protein resides in the cytoplasm. In terms of biological role, capsid protein (CA) is the structural component of the virus-like particle (VLP), forming the shell that encapsulates the retrotransposons dimeric RNA genome. The particles are assembled from trimer-clustered units and there are holes in the capsid shells that allow for the diffusion of macromolecules. CA also has nucleocapsid-like chaperone activity, promoting primer tRNA(i)-Met annealing to the multipartite primer-binding site (PBS), dimerization of Ty1 RNA and initiation of reverse transcription. The sequence is that of Transposon Ty1-DR1 Gag polyprotein (TY1A-DR1) from Saccharomyces cerevisiae (strain ATCC 204508 / S288c) (Baker's yeast).